The sequence spans 148 residues: Large ribosomal subunit protein bL9 (148 aa).

The protein belongs to the bacterial ribosomal protein bL9 family.

Binds to the 23S rRNA. This chain is Large ribosomal subunit protein bL9, found in Bacillus mycoides (strain KBAB4) (Bacillus weihenstephanensis).